Here is a 172-residue protein sequence, read N- to C-terminus: Bacilliredoxin SRU_0242 (172 aa).

The tract at residues 141 to 172 (TDEAPPSDAPSRPDLSSSPNAGGLPSTFQSIS) is disordered. Positions 154 to 172 (DLSSSPNAGGLPSTFQSIS) are enriched in polar residues.

It belongs to the bacilliredoxin family.

The sequence is that of Bacilliredoxin SRU_0242 from Salinibacter ruber (strain DSM 13855 / M31).